The sequence spans 346 residues: SUMO-activating enzyme subunit 1 (346 aa).

The residue at position 1 (M1) is an N-acetylmethionine. Position 2 is an N-acetylvaline; in SUMO-activating enzyme subunit 1, N-terminally processed (V2). Position 12 is a phosphoserine (S12). K198 carries the N6-acetyllysine modification.

Belongs to the ubiquitin-activating E1 family. As to quaternary structure, heterodimer of SAE1 and UBA2/SAE2. The heterodimer corresponds to the two domains that are encoded on a single polypeptide chain in ubiquitin-activating enzyme E1. Interacts with UBE2I. Expression level increases during S phase and drops in G2 phase (at protein level).

Its subcellular location is the nucleus. It functions in the pathway protein modification; protein sumoylation. Functionally, the heterodimer acts as an E1 ligase for SUMO1, SUMO2, SUMO3, and probably SUMO4. It mediates ATP-dependent activation of SUMO proteins followed by formation of a thioester bond between a SUMO protein and a conserved active site cysteine residue on UBA2/SAE2. The polypeptide is SUMO-activating enzyme subunit 1 (SAE1) (Homo sapiens (Human)).